The sequence spans 259 residues: Glutathione S-transferase domain-containing protein DDB_G0274705 (259 aa).

The 90-residue stretch at 7–96 (KIDYIFYTNN…YLAQKFNTFL (90 aa)) folds into the GST N-terminal domain. The GST C-terminal domain occupies 102 to 232 (NPLENSEVIT…GFKNFNPSLL (131 aa)).

This sequence belongs to the GST superfamily.

The polypeptide is Glutathione S-transferase domain-containing protein DDB_G0274705 (Dictyostelium discoideum (Social amoeba)).